The sequence spans 2039 residues: Calcium-channel protein CCH1 (2039 aa).

Disordered stretches follow at residues 1–171 and 206–288; these read MQGR…PPRS and PQLK…PQKE. Basic and acidic residues predominate over residues 64-80; sequence STEEKKGDEYNGNDKDS. N-linked (GlcNAc...) asparagine glycosylation occurs at Asn98. 2 stretches are compositionally biased toward low complexity: residues 122 to 132 and 147 to 164; these read SPSTKSAKSSS and FSSY…SPSS. Over residues 209–226 the composition is skewed to basic and acidic residues; it reads KSEKSRPVSDVGEDRGEG. 2 N-linked (GlcNAc...) asparagine glycosylation sites follow: Asn257 and Asn269. Positions 271–281 are enriched in basic residues; that stretch reads SRKKPSPKFFH. A Phosphoserine modification is found at Ser284. Residues 346–366 traverse the membrane as a helical segment; it reads YSLLYNTLLTFYAILLAIRTY. Asn379 is a glycosylation site (N-linked (GlcNAc...) asparagine). Residues 384–404 form a helical membrane-spanning segment; it reads FIFILSACFTGNDIAKIIAFG. Asn559 is a glycosylation site (N-linked (GlcNAc...) asparagine). 3 consecutive transmembrane segments (helical) span residues 563–583, 658–678, and 691–711; these read MLVY…QGSF, IVNS…TDLM, and LFFI…LIAV. N-linked (GlcNAc...) asparagine glycans are attached at residues Asn754 and Asn760. A run of 3 helical transmembrane segments spans residues 766 to 786, 809 to 829, and 841 to 861; these read LAIY…DIGM, ISIV…PNMW, and FIIS…VLGH. 2 N-linked (GlcNAc...) asparagine glycosylation sites follow: Asn882 and Asn900. A run of 2 helical transmembrane segments spans residues 904 to 924 and 942 to 962; these read FYFF…EGVI and SFLS…LYAL. A glycan (N-linked (GlcNAc...) asparagine) is linked at Asn968. A helical transmembrane segment spans residues 978–998; the sequence is FFIIWFLLSNSVILNIFIALI. N-linked (GlcNAc...) asparagine glycosylation is present at Asn1153. The chain crosses the membrane as a helical span at residues 1207–1227; it reads VFVFIFALATILLIVCSCYVT. N-linked (GlcNAc...) asparagine glycosylation is present at Asn1240. Transmembrane regions (helical) follow at residues 1247-1267 and 1277-1297; these read CAFI…DGFI and PWNF…IAYL. The N-linked (GlcNAc...) asparagine glycan is linked to Asn1302. Transmembrane regions (helical) follow at residues 1340–1360 and 1408–1428; these read IFEA…WGLS and FASA…VDLL. N-linked (GlcNAc...) asparagine glycosylation occurs at Asn1433. 5 helical membrane passes run 1452–1472, 1529–1549, 1554–1574, 1596–1616, and 1618–1638; these read FLVL…VSFI, NFYY…MLLS, PGNL…VFLI, IRLS…HVPA, and HYWF…FIIP. Residue Asn1640 is glycosylated (N-linked (GlcNAc...) asparagine). A helical membrane pass occupies residues 1654-1674; that stretch reads LPPILSLTYTWGVLFLVYAIA. Asn1687 and Asn1732 each carry an N-linked (GlcNAc...) asparagine glycan. Residues 1748–1768 traverse the membrane as a helical segment; the sequence is LMSWNIISMYIFVNMFVSLII. 2 N-linked (GlcNAc...) asparagine glycosylation sites follow: Asn1770 and Asn1785. The region spanning 1787-1822 is the EF-hand domain; that stretch reads SEIKKYIEAWSKFDTDGTGELELSYLPRIMHSFDGP. The tract at residues 2011 to 2039 is disordered; the sequence is PRMNQDSTMEPPEEPIDNNDDSANDLIDR. A compositionally biased stretch (acidic residues) spans 2021 to 2033; that stretch reads PPEEPIDNNDDSA.

Belongs to the calcium channel alpha-1 subunit (TC 1.A.1.11) family. Interacts with MID1 to form a Ca(2+) influx channel.

It localises to the cell membrane. Its function is as follows. Voltage-gated, high-affinity calcium channel that functions together with MID1 to mediate calcium entry into cells. Required during conditions of environmental stress. The chain is Calcium-channel protein CCH1 (CCH1) from Saccharomyces cerevisiae (strain ATCC 204508 / S288c) (Baker's yeast).